A 562-amino-acid polypeptide reads, in one-letter code: Sulfite reductase [NADPH] hemoprotein beta-component (562 aa).

Positions 425, 431, 470, and 474 each coordinate [4Fe-4S] cluster. A siroheme-binding site is contributed by C474.

Belongs to the nitrite and sulfite reductase 4Fe-4S domain family. As to quaternary structure, alpha(8)-beta(8). The alpha component is a flavoprotein, the beta component is a hemoprotein. Siroheme is required as a cofactor. Requires [4Fe-4S] cluster as cofactor.

It catalyses the reaction hydrogen sulfide + 3 NADP(+) + 3 H2O = sulfite + 3 NADPH + 4 H(+). It participates in sulfur metabolism; hydrogen sulfide biosynthesis; hydrogen sulfide from sulfite (NADPH route): step 1/1. Its function is as follows. Component of the sulfite reductase complex that catalyzes the 6-electron reduction of sulfite to sulfide. This is one of several activities required for the biosynthesis of L-cysteine from sulfate. In Tolumonas auensis (strain DSM 9187 / NBRC 110442 / TA 4), this protein is Sulfite reductase [NADPH] hemoprotein beta-component.